The chain runs to 780 residues: Acyl-CoA dehydrogenase family member 11 (780 aa).

N6-acetyllysine is present on lysine 177. Residue tyrosine 324 is modified to Phosphotyrosine. At lysine 391 the chain carries N6-succinyllysine. Residues 504-514 (FCMTEPDVASS) and 538-540 (WSS) contribute to the FAD site. Serine 514 contacts substrate. Substrate is bound at residue 629–632 (GPGR). FAD contacts are provided by residues arginine 657, glutamine 727, and 727-731 (QVCGG). Glycine 755 contributes to the substrate binding site. 756–758 (PDE) serves as a coordination point for FAD.

Belongs to the acyl-CoA dehydrogenase family. In terms of assembly, homodimer. FAD is required as a cofactor. Widely expressed with highest levels in brain followed by liver, heart and kidney.

The protein localises to the peroxisome. It localises to the mitochondrion membrane. It catalyses the reaction a 2,3-saturated acyl-CoA + oxidized [electron-transfer flavoprotein] + H(+) = a (2E)-enoyl-CoA + reduced [electron-transfer flavoprotein]. The enzyme catalyses docosanoyl-CoA + oxidized [electron-transfer flavoprotein] + H(+) = (2E)-docosenoyl-CoA + reduced [electron-transfer flavoprotein]. The catalysed reaction is tetracosanoyl-CoA + oxidized [electron-transfer flavoprotein] + H(+) = (2E)-tetracosenoyl-CoA + reduced [electron-transfer flavoprotein]. It carries out the reaction eicosanoyl-CoA + oxidized [electron-transfer flavoprotein] + H(+) = (2E)-eicosenoyl-CoA + reduced [electron-transfer flavoprotein]. It catalyses the reaction hexacosanoyl-CoA + oxidized [electron-transfer flavoprotein] + H(+) = (2E)-hexacosenoyl-CoA + reduced [electron-transfer flavoprotein]. The enzyme catalyses tricosanoyl-CoA + oxidized [electron-transfer flavoprotein] + H(+) = (2E)-tricosenoyl-CoA + reduced [electron-transfer flavoprotein]. It participates in lipid metabolism; fatty acid beta-oxidation. Functionally, acyl-CoA dehydrogenase, that exhibits maximal activity towards saturated C22-CoA. Probably participates in beta-oxydation and energy production but could also play a role in the metabolism of specific fatty acids to control fatty acids composition of cellular lipids in brain. This is Acyl-CoA dehydrogenase family member 11 (ACAD11) from Homo sapiens (Human).